A 729-amino-acid polypeptide reads, in one-letter code: Fatty acid oxidation complex subunit alpha (729 aa).

The segment at Met-1–Ala-189 is enoyl-CoA hydratase/isomerase. Asp-296 is a substrate binding site. Residues Ser-311–Ala-729 form a 3-hydroxyacyl-CoA dehydrogenase region. NAD(+) contacts are provided by residues Met-324, Asp-343, Val-400–Glu-402, Lys-407, and Ser-429. His-450 acts as the For 3-hydroxyacyl-CoA dehydrogenase activity in catalysis. Position 453 (Asn-453) interacts with NAD(+). Substrate is bound by residues Asn-500 and Tyr-660.

This sequence in the N-terminal section; belongs to the enoyl-CoA hydratase/isomerase family. In the C-terminal section; belongs to the 3-hydroxyacyl-CoA dehydrogenase family. Heterotetramer of two alpha chains (FadB) and two beta chains (FadA).

The catalysed reaction is a (3S)-3-hydroxyacyl-CoA + NAD(+) = a 3-oxoacyl-CoA + NADH + H(+). It carries out the reaction a (3S)-3-hydroxyacyl-CoA = a (2E)-enoyl-CoA + H2O. It catalyses the reaction a 4-saturated-(3S)-3-hydroxyacyl-CoA = a (3E)-enoyl-CoA + H2O. The enzyme catalyses (3S)-3-hydroxybutanoyl-CoA = (3R)-3-hydroxybutanoyl-CoA. The catalysed reaction is a (3Z)-enoyl-CoA = a 4-saturated (2E)-enoyl-CoA. It carries out the reaction a (3E)-enoyl-CoA = a 4-saturated (2E)-enoyl-CoA. Its pathway is lipid metabolism; fatty acid beta-oxidation. Involved in the aerobic and anaerobic degradation of long-chain fatty acids via beta-oxidation cycle. Catalyzes the formation of 3-oxoacyl-CoA from enoyl-CoA via L-3-hydroxyacyl-CoA. It can also use D-3-hydroxyacyl-CoA and cis-3-enoyl-CoA as substrate. This Yersinia enterocolitica serotype O:8 / biotype 1B (strain NCTC 13174 / 8081) protein is Fatty acid oxidation complex subunit alpha.